The following is a 456-amino-acid chain: UDP-N-acetylmuramoylalanine--D-glutamate ligase (456 aa).

ATP is bound at residue 113-119; sequence GTNGKTT.

Belongs to the MurCDEF family.

The protein localises to the cytoplasm. It carries out the reaction UDP-N-acetyl-alpha-D-muramoyl-L-alanine + D-glutamate + ATP = UDP-N-acetyl-alpha-D-muramoyl-L-alanyl-D-glutamate + ADP + phosphate + H(+). Its pathway is cell wall biogenesis; peptidoglycan biosynthesis. In terms of biological role, cell wall formation. Catalyzes the addition of glutamate to the nucleotide precursor UDP-N-acetylmuramoyl-L-alanine (UMA). The protein is UDP-N-acetylmuramoylalanine--D-glutamate ligase of Crocosphaera subtropica (strain ATCC 51142 / BH68) (Cyanothece sp. (strain ATCC 51142)).